We begin with the raw amino-acid sequence, 417 residues long: NADH-quinone oxidoreductase subunit D (417 aa).

It belongs to the complex I 49 kDa subunit family. As to quaternary structure, NDH-1 is composed of 14 different subunits. Subunits NuoB, C, D, E, F, and G constitute the peripheral sector of the complex.

It is found in the cell inner membrane. The catalysed reaction is a quinone + NADH + 5 H(+)(in) = a quinol + NAD(+) + 4 H(+)(out). NDH-1 shuttles electrons from NADH, via FMN and iron-sulfur (Fe-S) centers, to quinones in the respiratory chain. The immediate electron acceptor for the enzyme in this species is believed to be ubiquinone. Couples the redox reaction to proton translocation (for every two electrons transferred, four hydrogen ions are translocated across the cytoplasmic membrane), and thus conserves the redox energy in a proton gradient. The chain is NADH-quinone oxidoreductase subunit D from Burkholderia mallei (strain NCTC 10247).